The sequence spans 203 residues: uncharacterized protein (203 aa).

This is an uncharacterized protein from Magallana gigas (Pacific oyster).